A 709-amino-acid polypeptide reads, in one-letter code: Polyribonucleotide nucleotidyltransferase (709 aa).

Positions 487 and 493 each coordinate Mg(2+). The 60-residue stretch at 554-613 folds into the KH domain; the sequence is PRIHTMKISSDKIKDVIGKGGAVIRALCEETGTTIEIEDDGTIKIAATEGAAAKEAIRRI. The S1 motif domain occupies 623–691; the sequence is GKIYTGKVMR…RQGRIRLSIK (69 aa).

Belongs to the polyribonucleotide nucleotidyltransferase family. In terms of assembly, component of the RNA degradosome, which is a multiprotein complex involved in RNA processing and mRNA degradation. Requires Mg(2+) as cofactor.

It localises to the cytoplasm. The catalysed reaction is RNA(n+1) + phosphate = RNA(n) + a ribonucleoside 5'-diphosphate. In terms of biological role, involved in mRNA degradation. Catalyzes the phosphorolysis of single-stranded polyribonucleotides processively in the 3'- to 5'-direction. The sequence is that of Polyribonucleotide nucleotidyltransferase from Aliivibrio fischeri (strain ATCC 700601 / ES114) (Vibrio fischeri).